The sequence spans 130 residues: Small ribosomal subunit protein uS9 (130 aa).

This sequence belongs to the universal ribosomal protein uS9 family.

The sequence is that of Small ribosomal subunit protein uS9 from Shewanella loihica (strain ATCC BAA-1088 / PV-4).